The sequence spans 678 residues: Putative cyclic nucleotide-gated ion channel 15 (678 aa).

Residues 1-81 (MGYGNSRSVR…RGQTIRRWNK (81 aa)) lie on the Cytoplasmic side of the membrane. Residues 82-102 (IFLIACLVSLFVDPLFFFLPV) form a helical membrane-spanning segment. Residues 103–115 (MRNEACITIGVRL) are Extracellular-facing. The helical transmembrane segment at 116-136 (EVVLTLIRSLADAFYIAQILI) threads the bilayer. Over 137–170 (RFRTAYIAPPSRVFGRGELVIDSRKIAWRYLHKS) the chain is Cytoplasmic. Residues 171–191 (FWIHLVAALPLPQVLIWIIIP) traverse the membrane as a helical segment. Residues 192-203 (NLRGSPMTNTKN) are Extracellular-facing. Residues 204 to 224 (VLRFIIIFQYVPRMFLIFPLS) form a helical membrane-spanning segment. Residues 225-245 (RQIIKATGVVTETAWAGAAYN) lie on the Cytoplasmic side of the membrane. Residues 246–266 (LMLYMLASHVLGACWYLLAVE) form a helical membrane-spanning segment. The Extracellular portion of the chain corresponds to 267–364 (RQEACWRHAC…GQNLATSTYA (98 aa)). The helical transmembrane segment at 365–385 (GEILFAIIIATLGLVLFALLI) threads the bilayer. Residues 386-678 (GNMQTYLQST…KPVEPDFSSE (293 aa)) lie on the Cytoplasmic side of the membrane. Residues 471 to 595 (LFDQ…TKQL) and glutamate 542 each bind a nucleoside 3',5'-cyclic phosphate. The calmodulin-binding stretch occupies residues 587 to 602 (FRRLHTKQLRHKFRFY). Residues 607–638 (RTWAACFIQAAWRRHRKRKYKTELRAKEEFHY) enclose the IQ domain. The segment covering 656-668 (RSGSDSGMMSSIQ) has biased composition (polar residues). A disordered region spans residues 656–678 (RSGSDSGMMSSIQKPVEPDFSSE).

Belongs to the cyclic nucleotide-gated cation channel (TC 1.A.1.5) family. In terms of assembly, homotetramer or heterotetramer.

The protein localises to the cell membrane. Functionally, putative cyclic nucleotide-gated ion channel. In Arabidopsis thaliana (Mouse-ear cress), this protein is Putative cyclic nucleotide-gated ion channel 15 (CNGC15).